A 376-amino-acid chain; its full sequence is Chorismate synthase (376 aa).

NADP(+) is bound by residues arginine 39 and arginine 45. Residues 115–117 (RSS), glycine 276, 291–295 (KPIPT), and arginine 317 contribute to the FMN site.

The protein belongs to the chorismate synthase family. As to quaternary structure, homotetramer. The cofactor is FMNH2.

It carries out the reaction 5-O-(1-carboxyvinyl)-3-phosphoshikimate = chorismate + phosphate. The protein operates within metabolic intermediate biosynthesis; chorismate biosynthesis; chorismate from D-erythrose 4-phosphate and phosphoenolpyruvate: step 7/7. Catalyzes the anti-1,4-elimination of the C-3 phosphate and the C-6 proR hydrogen from 5-enolpyruvylshikimate-3-phosphate (EPSP) to yield chorismate, which is the branch point compound that serves as the starting substrate for the three terminal pathways of aromatic amino acid biosynthesis. This reaction introduces a second double bond into the aromatic ring system. The sequence is that of Chorismate synthase from Thermotoga maritima (strain ATCC 43589 / DSM 3109 / JCM 10099 / NBRC 100826 / MSB8).